Consider the following 180-residue polypeptide: MMKIIRAKLHGIRVTNADLNYHGSITLDPEQCEMAGIYPMEFVDIWNKNSAARISTYVIFGEPGSRCCVLNGAAARTCQKGDELIIAASADISGPEKLYDIKPRILTFLPDNHVDQVLYYDVFQSEKRPYDFRIVDADKHTIESCHTWPNVDITKLRSDLAAKGWSEAEIDSFIASHFSL.

The Schiff-base intermediate with substrate; via pyruvic acid role is filled by serine 24. Serine 24 carries the post-translational modification Pyruvic acid (Ser). Threonine 56 contributes to the substrate binding site. Tyrosine 57 acts as the Proton donor in catalysis. 72-74 (GAA) is a binding site for substrate.

It belongs to the PanD family. Heterooctamer of four alpha and four beta subunits. Pyruvate is required as a cofactor. Is synthesized initially as an inactive proenzyme, which is activated by self-cleavage at a specific serine bond to produce a beta-subunit with a hydroxyl group at its C-terminus and an alpha-subunit with a pyruvoyl group at its N-terminus.

The protein resides in the cytoplasm. It carries out the reaction L-aspartate + H(+) = beta-alanine + CO2. Its pathway is cofactor biosynthesis; (R)-pantothenate biosynthesis; beta-alanine from L-aspartate: step 1/1. Catalyzes the pyruvoyl-dependent decarboxylation of aspartate to produce beta-alanine. The polypeptide is Aspartate 1-decarboxylase (Paramagnetospirillum magneticum (strain ATCC 700264 / AMB-1) (Magnetospirillum magneticum)).